A 95-amino-acid polypeptide reads, in one-letter code: Large ribosomal subunit protein bL25 (95 aa).

Belongs to the bacterial ribosomal protein bL25 family. In terms of assembly, part of the 50S ribosomal subunit; part of the 5S rRNA/L5/L18/L25 subcomplex. Contacts the 5S rRNA. Binds to the 5S rRNA independently of L5 and L18.

Functionally, this is one of the proteins that binds to the 5S RNA in the ribosome where it forms part of the central protuberance. The protein is Large ribosomal subunit protein bL25 of Mannheimia succiniciproducens (strain KCTC 0769BP / MBEL55E).